An 81-amino-acid chain; its full sequence is Large ribosomal subunit protein bL27 (81 aa).

Residues 1 to 11 (MATSKSGGSSK) show a composition bias toward polar residues. Residues 1 to 20 (MATSKSGGSSKNGRDSISKR) are disordered.

This sequence belongs to the bacterial ribosomal protein bL27 family.

This Borreliella afzelii (strain PKo) (Borrelia afzelii) protein is Large ribosomal subunit protein bL27.